The sequence spans 186 residues: Large ribosomal subunit protein uL10 (186 aa).

As to quaternary structure, part of the ribosomal stalk of the 50S ribosomal subunit. The N-terminus interacts with L11 and the large rRNA to form the base of the stalk. The C-terminus forms an elongated spine to which L12 dimers bind in a sequential fashion forming a multimeric L10(L12)X complex.

Forms part of the ribosomal stalk, playing a central role in the interaction of the ribosome with GTP-bound translation factors. The polypeptide is Large ribosomal subunit protein uL10 (Rhodopseudomonas palustris (strain ATCC BAA-98 / CGA009)).